The chain runs to 92 residues: Sugar fermentation stimulation protein B (92 aa).

Residues 50–69 (EMIIAKALGTDPWVIWPSRY) constitute a DNA-binding region (H-T-H motif).

The protein belongs to the ner transcriptional regulatory family.

This protein is involved in positive regulation of the metabolism of sugars. In Escherichia coli O157:H7, this protein is Sugar fermentation stimulation protein B (sfsB).